The chain runs to 277 residues: Raffinose operon transcriptional regulatory protein RafR (277 aa).

An HTH araC/xylS-type domain is found at 176-274 (NLAVSYLQEN…GASPSYYRKS (99 aa)). 2 DNA-binding regions (H-T-H motif) span residues 193-214 (MDLCHYLNLSRSYLYTLFKTHA) and 241-264 (VQSIANMVGYKDSFTFSKAFKRYS).

Involved in the regulation of the raffinose-operon. This chain is Raffinose operon transcriptional regulatory protein RafR (rafR), found in Pediococcus pentosaceus.